A 795-amino-acid polypeptide reads, in one-letter code: Phenylalanine--tRNA ligase beta subunit (795 aa).

The 110-residue stretch at 39 to 148 (AGTFNGVKVG…IDAPIGMDFR (110 aa)) folds into the tRNA-binding domain. The region spanning 401–476 (PKPNKVALRR…RIYGYDNIPN (76 aa)) is the B5 domain. Mg(2+) is bound by residues Asp454, Asp460, Glu463, and Glu464. An FDX-ACB domain is found at 701–794 (SKFPANRRDI…VSEKFGASLR (94 aa)).

Belongs to the phenylalanyl-tRNA synthetase beta subunit family. Type 1 subfamily. As to quaternary structure, tetramer of two alpha and two beta subunits. Requires Mg(2+) as cofactor.

The protein localises to the cytoplasm. The catalysed reaction is tRNA(Phe) + L-phenylalanine + ATP = L-phenylalanyl-tRNA(Phe) + AMP + diphosphate + H(+). This Vibrio vulnificus (strain YJ016) protein is Phenylalanine--tRNA ligase beta subunit.